Here is a 500-residue protein sequence, read N- to C-terminus: Archaeal-type glutamate synthase [NADPH] (500 aa).

2 4Fe-4S ferredoxin-type domains span residues 7 to 38 and 40 to 69; these read SKFI…YDED and DQIK…VRNN. [4Fe-4S] cluster-binding residues include Cys-18, Cys-21, Cys-24, Cys-28, Cys-49, Cys-52, Cys-55, and Cys-59.

The protein belongs to the glutamate synthase family. FMN is required as a cofactor.

The catalysed reaction is 2 L-glutamate + NADP(+) = L-glutamine + 2-oxoglutarate + NADPH + H(+). The polypeptide is Archaeal-type glutamate synthase [NADPH] (Dehalococcoides mccartyi (strain ATCC BAA-2266 / KCTC 15142 / 195) (Dehalococcoides ethenogenes (strain 195))).